Consider the following 531-residue polypeptide: MKPTSGPEEARRPASDIRVFASNCSMHGLGHVFGPGSLSLRRGMWAAAVVLSVATFLYQVAERVRYYREFHHQTALDERESHRLIFPAVTLCNINPLRRSRLTPNDLHWAGSALLGLDPAEHAAFLRALGRPPAPPGFMPSPTFDMAQLYARAGHSLDDMLLDCRFRGQPCGPENFTTIFTRMGKCYTFNSGADGAELLTTTRGGMGNGLDIMLDVQQEEYLPVWRDNEETPFEVGIRVQIHSQEEPPIIDQLGLGVSPGYQTFVSCQQQQLSFLPPPWGDCSSASLNPNYEPEPSDPLGSPSPSPSPPYTLMGCRLACETRYVARKCGCRMVYMPGDVPVCSPQQYKNCAHPAIDAMLRKDSCACPNPCASTRYAKELSMVRIPSRAAARFLARKLNRSEAYIAENVLALDIFFEALNYETVEQKKAYEMSELLGDIGGQMGLFIGASLLTILEILDYLCEVFRDKVLGYFWNRQHSQRHSSTNLLQEGLGSHRTQVPHLSLGPRPPTPPCAVTKTLSASHRTCYLVTQL.

Topologically, residues 1–43 (MKPTSGPEEARRPASDIRVFASNCSMHGLGHVFGPGSLSLRRG) are cytoplasmic. Residues 44–61 (MWAAAVVLSVATFLYQVA) form a helical membrane-spanning segment. Residues 62-441 (ERVRYYREFH…SELLGDIGGQ (380 aa)) lie on the Extracellular side of the membrane. Intrachain disulfides connect Cys92–Cys186, Cys164–Cys171, Cys282–Cys370, Cys315–Cys366, Cys319–Cys364, Cys328–Cys350, and Cys330–Cys342. N-linked (GlcNAc...) asparagine glycosylation is present at Asn175. Residues 285 to 307 (ASLNPNYEPEPSDPLGSPSPSPS) form a disordered region. An N-linked (GlcNAc...) asparagine glycan is attached at Asn398. Residues 442-460 (MGLFIGASLLTILEILDYL) form a helical membrane-spanning segment. The short motif at 447 to 449 (GAS) is the GAS motif; ion selectivity filter element. Residues 461–531 (CEVFRDKVLG…HRTCYLVTQL (71 aa)) lie on the Cytoplasmic side of the membrane. The short motif at 528-531 (VTQL) is the PDZ-binding element.

The protein belongs to the amiloride-sensitive sodium channel (TC 1.A.6) family. ASIC3 subfamily. Can form homotrimeric channels. Heterotrimer; forms functional heterotrimers producing channel with different properties. Forms heterotrimers with ASIC2; gives rise to a biphasic current with a sustained current which discriminates poorly between Na(+) and K(+). Interacts with STOM; inhibits ASIC3 acid-evoked current. Interacts with LIN7B (via PDZ domain); increases ASIC3 expression at the plasma membrane. Interacts with MAGI1 (via PDZ domain); probably regulates ASIC3. Interacts with GOPC (via PDZ domain); probably regulates ASIC3. Interacts with DLG4 (via PDZ domain); reduces ASIC3 expression at the plasma membrane. In terms of tissue distribution, expressed by sensory neurons. Strongly expressed in brain, spinal cord, lung, lymph nodes, kidney, pituitary, heart and testis.

The protein resides in the cell membrane. It is found in the cytoplasm. The catalysed reaction is Na(+)(in) = Na(+)(out). The enzyme catalyses K(+)(in) = K(+)(out). It carries out the reaction Ca(2+)(in) = Ca(2+)(out). Its activity is regulated as follows. Inhibited by the diuretic drug amiloride. Inhibited by the diuretic drug triamterene. Potentiated by the vertebrate neuropeptide FF (NPFF) and the related FMRFamide. Specifically and reversibly inhibited by the a sea anemone toxin APETx2. Functionally, forms pH-gated heterotrimeric sodium channels that act as postsynaptic excitatory receptors in the nervous system. Upon extracellular acidification, these channels generate a biphasic current with a fast inactivating and a slow sustained phase. ASIC3 is more sensitive to protons and gates between closed, open, and desensitized states faster than other ASICs. Displays high selectivity for sodium ions but can also permit the permeation of other cations. As a neuronal acid sensor, probably contributes to mechanoreception, acid nociception, and heat nociception. By forming heterotrimeric channels with ASIC2, generates a biphasic current with a fast inactivating and a slow sustained phase, which in sensory neurons is proposed to mediate the pain induced by acidosis that occurs in ischemic, damaged or inflamed tissues. The sequence is that of Acid-sensing ion channel 3 from Homo sapiens (Human).